Consider the following 170-residue polypeptide: RNA pyrophosphohydrolase (170 aa).

The Nudix hydrolase domain maps to 8–151; it reads PYRPNVGIAL…KKALYAELIP (144 aa). The Nudix box motif lies at 42-63; the sequence is GGIDEGETPQVAALREMGEEIG.

The protein belongs to the Nudix hydrolase family. RppH subfamily. It depends on a divalent metal cation as a cofactor.

Functionally, accelerates the degradation of transcripts by removing pyrophosphate from the 5'-end of triphosphorylated RNA, leading to a more labile monophosphorylated state that can stimulate subsequent ribonuclease cleavage. This chain is RNA pyrophosphohydrolase, found in Gluconobacter oxydans (strain 621H) (Gluconobacter suboxydans).